A 1001-amino-acid chain; its full sequence is O-GlcNAcase NagJ (1001 aa).

Positions 1-30 are cleaved as a signal peptide; the sequence is MKRKMLKRLLTSAFACMFIANGLITTTVRA. The interval 179–469 is catalytic domain; sequence VSARGIVEGF…WNRAIDMLYG (291 aa). In terms of domain architecture, GH84 spans 180–452; it reads SARGIVEGFY…TAADYSWNMD (273 aa). Gly187, Lys218, and Asp297 together coordinate a protein. Asp298 acts as the Proton donor in catalysis. Residues Tyr335, 394-396, Asp401, and Asn429 contribute to the a protein site; that span reads WWN. Coiled-coil stretches lie at residues 515–543 and 573–597; these read KEDA…KANL and VAQL…LNTA. Positions 916-1001 constitute a Fibronectin type-III domain; that stretch reads PVRDFKASEI…KESLTLRTAR (86 aa).

The protein belongs to the glycosyl hydrolase 84 family.

The catalysed reaction is 3-O-(N-acetyl-beta-D-glucosaminyl)-L-seryl-[protein] + H2O = N-acetyl-D-glucosamine + L-seryl-[protein]. It carries out the reaction 3-O-(N-acetyl-beta-D-glucosaminyl)-L-threonyl-[protein] + H2O = L-threonyl-[protein] + N-acetyl-D-glucosamine. Its activity is regulated as follows. Inhibited by O-(2-acetamido-2-deoxy-D-glucopyranosylidene)amino-N-phenyl-carbamate (PUGNAc) and streptozotocin. Its function is as follows. Binds carbohydrates. Capable of hydrolyzing the glycosidic link of O-GlcNAcylated proteins. Can bind and deglycosylate O-glycosylated peptides from mammals. The chain is O-GlcNAcase NagJ (nagJ) from Clostridium perfringens (strain ATCC 13124 / DSM 756 / JCM 1290 / NCIMB 6125 / NCTC 8237 / Type A).